The following is a 368-amino-acid chain: Peptide chain release factor 2 (368 aa).

N5-methylglutamine is present on Gln250.

Belongs to the prokaryotic/mitochondrial release factor family. In terms of processing, methylated by PrmC. Methylation increases the termination efficiency of RF2.

The protein localises to the cytoplasm. Functionally, peptide chain release factor 2 directs the termination of translation in response to the peptide chain termination codons UGA and UAA. This chain is Peptide chain release factor 2, found in Chlamydia trachomatis serovar L2b (strain UCH-1/proctitis).